A 149-amino-acid chain; its full sequence is Transcriptional repressor NrdR (149 aa).

A zinc finger spans residues 3 to 34 (CPFCSEQETKVIDSRLVAEGQQVRRRRECMVC). Residues 49 to 139 (PRVIKRDGSR…VYRSFEDIRE (91 aa)) enclose the ATP-cone domain.

The protein belongs to the NrdR family. It depends on Zn(2+) as a cofactor.

Functionally, negatively regulates transcription of bacterial ribonucleotide reductase nrd genes and operons by binding to NrdR-boxes. This chain is Transcriptional repressor NrdR, found in Alteromonas mediterranea (strain DSM 17117 / CIP 110805 / LMG 28347 / Deep ecotype).